The chain runs to 434 residues: CCA tRNA nucleotidyltransferase 1, mitochondrial (434 aa).

The N-terminal 41 residues, 1–41 (MLRCLYHWHRPVLNRRWSRLCLPKQYLFTMKLQSPEFQSLF), are a transit peptide targeting the mitochondrion. G64 and R67 together coordinate ATP. CTP contacts are provided by G64 and R67. Residues D77 and D79 each contribute to the Mg(2+) site. R151, D194, R197, R200, and R203 together coordinate ATP. CTP contacts are provided by R151, D194, R197, R200, and R203. The residue at position 400 (S400) is a Phosphoserine. Position 402 is an N6-acetyllysine (K402).

The protein belongs to the tRNA nucleotidyltransferase/poly(A) polymerase family. Monomer, and homodimer; disulfide-linked. Mg(2+) serves as cofactor.

It is found in the mitochondrion. Its subcellular location is the cytoplasm. The protein localises to the nucleus. It catalyses the reaction a tRNA precursor + 2 CTP + ATP = a tRNA with a 3' CCA end + 3 diphosphate. It carries out the reaction a tRNA with a 3' CCA end + 2 CTP + ATP = a tRNA with a 3' CCACCA end + 3 diphosphate. Nucleotidyltransferase that catalyzes the addition and repair of the essential 3'-terminal CCA sequence in tRNAs, which is necessary for the attachment of amino acids to the 3' terminus of tRNA molecules, using CTP and ATP as substrates. tRNA 3'-terminal CCA addition is required both for tRNA processing and repair. Promotes tRNA repair and recycling downstream of the ribosome-associated quality control (RQC) pathway by mediating addition of the tRNA 3'-terminal CCA following cleavage by ANKZF1 and repair by ELAC1. Also involved in tRNA surveillance by mediating tandem CCA addition to generate a CCACCA at the 3' terminus of unstable tRNAs and tRNA-like transcripts. While stable tRNAs receive only 3'-terminal CCA, unstable tRNAs beginning with GG are marked with CCACCA and rapidly degraded. The structural flexibility of RNA controls the choice between CCA versus CCACCA addition: following the first CCA addition cycle, nucleotide-binding to the active site triggers a clockwise screw motion, producing torque on the RNA. This ejects stable RNAs, whereas unstable RNAs are refolded while bound to the enzyme and subjected to a second CCA catalytic cycle. In terms of biological role, adds 2 C residues (CC-) to the 3' terminus of tRNA molecules instead of a complete CCA end as isoform 1 does (in vitro). The protein is CCA tRNA nucleotidyltransferase 1, mitochondrial of Homo sapiens (Human).